A 239-amino-acid polypeptide reads, in one-letter code: Purine nucleoside phosphorylase DeoD-type (239 aa).

An a purine D-ribonucleoside-binding site is contributed by histidine 5. Phosphate contacts are provided by residues glycine 21, arginine 25, arginine 44, and arginine 88 to serine 91. Residues glutamate 180–glutamate 182 and serine 204–aspartate 205 each bind a purine D-ribonucleoside. The active-site Proton donor is aspartate 205.

Belongs to the PNP/UDP phosphorylase family. In terms of assembly, homohexamer; trimer of homodimers.

It carries out the reaction a purine D-ribonucleoside + phosphate = a purine nucleobase + alpha-D-ribose 1-phosphate. The catalysed reaction is a purine 2'-deoxy-D-ribonucleoside + phosphate = a purine nucleobase + 2-deoxy-alpha-D-ribose 1-phosphate. Its function is as follows. Catalyzes the reversible phosphorolytic breakdown of the N-glycosidic bond in the beta-(deoxy)ribonucleoside molecules, with the formation of the corresponding free purine bases and pentose-1-phosphate. This Salmonella heidelberg (strain SL476) protein is Purine nucleoside phosphorylase DeoD-type.